Consider the following 188-residue polypeptide: dCTP deaminase (188 aa).

DCTP-binding positions include 111–116 (KSTYAR), 135–137 (TLE), glutamine 156, tyrosine 170, and glutamine 180. The Proton donor/acceptor role is filled by glutamate 137.

It belongs to the dCTP deaminase family. Homotrimer.

It carries out the reaction dCTP + H2O + H(+) = dUTP + NH4(+). It functions in the pathway pyrimidine metabolism; dUMP biosynthesis; dUMP from dCTP (dUTP route): step 1/2. Catalyzes the deamination of dCTP to dUTP. This chain is dCTP deaminase, found in Azotobacter vinelandii (strain DJ / ATCC BAA-1303).